The chain runs to 234 residues: Probable pectate lyase F (234 aa).

Positions 1–17 are cleaved as a signal peptide; the sequence is MWSSIAAFPVLVPVALA.

Belongs to the polysaccharide lyase 3 family. It depends on Ca(2+) as a cofactor.

The protein resides in the secreted. It catalyses the reaction Eliminative cleavage of (1-&gt;4)-alpha-D-galacturonan to give oligosaccharides with 4-deoxy-alpha-D-galact-4-enuronosyl groups at their non-reducing ends.. Functionally, pectinolytic enzyme consist of four classes of enzymes: pectin lyase, polygalacturonase, pectin methylesterase and rhamnogalacturonase. Among pectinolytic enzymes, pectin lyase is the most important in depolymerization of pectin, since it cleaves internal glycosidic bonds of highly methylated pectins. Favors pectate, the anion, over pectin, the methyl ester. The protein is Probable pectate lyase F (plyF) of Aspergillus fumigatus (strain ATCC MYA-4609 / CBS 101355 / FGSC A1100 / Af293) (Neosartorya fumigata).